The sequence spans 567 residues: Proline--tRNA ligase (567 aa).

This sequence belongs to the class-II aminoacyl-tRNA synthetase family. ProS type 1 subfamily. In terms of assembly, homodimer.

It is found in the cytoplasm. It carries out the reaction tRNA(Pro) + L-proline + ATP = L-prolyl-tRNA(Pro) + AMP + diphosphate. Functionally, catalyzes the attachment of proline to tRNA(Pro) in a two-step reaction: proline is first activated by ATP to form Pro-AMP and then transferred to the acceptor end of tRNA(Pro). As ProRS can inadvertently accommodate and process non-cognate amino acids such as alanine and cysteine, to avoid such errors it has two additional distinct editing activities against alanine. One activity is designated as 'pretransfer' editing and involves the tRNA(Pro)-independent hydrolysis of activated Ala-AMP. The other activity is designated 'posttransfer' editing and involves deacylation of mischarged Ala-tRNA(Pro). The misacylated Cys-tRNA(Pro) is not edited by ProRS. This Staphylococcus aureus (strain USA300) protein is Proline--tRNA ligase.